The chain runs to 795 residues: Probable alpha,alpha-trehalose-phosphate synthase [UDP-forming] 4 (795 aa).

Residues 4 to 469 (PRLLVVSMSL…WADDFMKLTL (466 aa)) are glycosyltransferase.

In the N-terminal section; belongs to the glycosyltransferase 20 family. The protein in the C-terminal section; belongs to the trehalose phosphatase family.

It carries out the reaction D-glucose 6-phosphate + UDP-alpha-D-glucose = alpha,alpha-trehalose 6-phosphate + UDP + H(+). This chain is Probable alpha,alpha-trehalose-phosphate synthase [UDP-forming] 4 (TPS4), found in Arabidopsis thaliana (Mouse-ear cress).